Consider the following 351-residue polypeptide: Photosystem II D2 protein (351 aa).

Residues 39-59 (CAYLAVGGWLTGTTFVTSWYT) form a helical membrane-spanning segment. Chlorophyll a is bound at residue His116. Residues 123 to 139 (GFCLRQFEIARLVGLRP) traverse the membrane as a helical segment. Pheophytin a contacts are provided by Gln128 and Asn141. The helical transmembrane segment at 151 to 164 (VFVSVFLMYPLGQA) threads the bilayer. His196 is a chlorophyll a binding site. Residues 206–226 (GALLCAIHGATVQNTLFEDGD) traverse the membrane as a helical segment. The a plastoquinone site is built by His213 and Phe260. Residue His213 coordinates Fe cation. His267 is a Fe cation binding site. Residues 277 to 293 (GLWTSAFGIVGLALNLR) traverse the membrane as a helical segment.

It belongs to the reaction center PufL/M/PsbA/D family. As to quaternary structure, PSII is composed of 1 copy each of membrane proteins PsbA, PsbB, PsbC, PsbD, PsbE, PsbF, PsbH, PsbI, PsbJ, PsbK, PsbL, PsbM, PsbT, PsbX, PsbY, PsbZ, Psb30/Ycf12, at least 3 peripheral proteins of the oxygen-evolving complex and a large number of cofactors. It forms dimeric complexes. The D1/D2 heterodimer binds P680, chlorophylls that are the primary electron donor of PSII, and subsequent electron acceptors. It shares a non-heme iron and each subunit binds pheophytin, quinone, additional chlorophylls, carotenoids and lipids. There is also a Cl(-1) ion associated with D1 and D2, which is required for oxygen evolution. The PSII complex binds additional chlorophylls, carotenoids and specific lipids. serves as cofactor.

The protein resides in the plastid. Its subcellular location is the chloroplast thylakoid membrane. The catalysed reaction is 2 a plastoquinone + 4 hnu + 2 H2O = 2 a plastoquinol + O2. Its function is as follows. Photosystem II (PSII) is a light-driven water:plastoquinone oxidoreductase that uses light energy to abstract electrons from H(2)O, generating O(2) and a proton gradient subsequently used for ATP formation. It consists of a core antenna complex that captures photons, and an electron transfer chain that converts photonic excitation into a charge separation. The D1/D2 (PsbA/PsbD) reaction center heterodimer binds P680, the primary electron donor of PSII as well as several subsequent electron acceptors. D2 is needed for assembly of a stable PSII complex. This Porphyra purpurea (Red seaweed) protein is Photosystem II D2 protein.